Here is a 62-residue protein sequence, read N- to C-terminus: Bacteriocin lactacin-F subunit LafX (62 aa).

A propeptide spanning residues 1–14 (MKLNDKELSKIVGG) is cleaved from the precursor.

It belongs to the bacteriocin class IIB family. As to quaternary structure, this bacteriocin depends upon the complementation of two peptides for activity: LafA and LafX. Associated with a 180 kDa bacteriocin complex.

In terms of biological role, heat stable bacteriocin active against Enterococcus faecalis and other Lactobacilli. The chain is Bacteriocin lactacin-F subunit LafX (lafX) from Lactobacillus johnsonii (strain CNCM I-12250 / La1 / NCC 533).